The chain runs to 79 residues: MORN repeat-containing protein 2 (79 aa).

MORN repeat units lie at residues 15–36 and 38–55; these read YEGQ…PNGA and YTGN…EYTD.

Its subcellular location is the cytoplasmic vesicle. The protein resides in the secretory vesicle. The protein localises to the acrosome. It localises to the nucleus. Its function is as follows. Might have a role in spermatogenesis. In Homo sapiens (Human), this protein is MORN repeat-containing protein 2.